A 490-amino-acid polypeptide reads, in one-letter code: Probable malate:quinone oxidoreductase (490 aa).

It belongs to the MQO family. FAD serves as cofactor.

The enzyme catalyses (S)-malate + a quinone = a quinol + oxaloacetate. It participates in carbohydrate metabolism; tricarboxylic acid cycle; oxaloacetate from (S)-malate (quinone route): step 1/1. In Corynebacterium jeikeium (strain K411), this protein is Probable malate:quinone oxidoreductase.